A 504-amino-acid polypeptide reads, in one-letter code: Ectoine/proline transporter ProP (504 aa).

The next 11 membrane-spanning stretches (helical) occupy residues 41–61 (FMEW…TAVF), 71–91 (LLAV…GGLV), 118–138 (LIGL…LLYL), 169–189 (FFGA…ASVV), 207–227 (DFGW…AVYL), 272–292 (LLIG…LTSY), 309–329 (AAVT…VGMW), 337–357 (PVYA…FLIM), 362–382 (IGAV…YVAL), 399–419 (GMGI…PLIT), and 430–450 (IVPA…LLFM). A disordered region spans residues 477-504 (NQDEDPNIDLSHMPFPDEENVGAEKQNA).

Belongs to the major facilitator superfamily.

The protein resides in the cell membrane. With respect to regulation, uptake is activated by osmotic stress. Inhibited by CCCP. Involved in the uptake of osmoprotectants. Can transport ectoine and proline. Protons are probably the coupling ions. The protein is Ectoine/proline transporter ProP of Corynebacterium glutamicum (strain ATCC 13032 / DSM 20300 / JCM 1318 / BCRC 11384 / CCUG 27702 / LMG 3730 / NBRC 12168 / NCIMB 10025 / NRRL B-2784 / 534).